The sequence spans 350 residues: Hydroxymethylglutaryl-CoA synthase (350 aa).

Residue Glu83 is the Proton donor/acceptor of the active site. Catalysis depends on Cys115, which acts as the Acyl-thioester intermediate. The (3S)-3-hydroxy-3-methylglutaryl-CoA site is built by Cys115 and Thr156. Arg204 contacts CoA. (3S)-3-hydroxy-3-methylglutaryl-CoA contacts are provided by Thr206 and His239. His239 acts as the Proton donor/acceptor in catalysis. CoA is bound at residue Lys244. Residues Asn271 and Ser301 each coordinate (3S)-3-hydroxy-3-methylglutaryl-CoA.

The protein belongs to the thiolase-like superfamily. Archaeal HMG-CoA synthase family. In terms of assembly, interacts with acetoacetyl-CoA thiolase that catalyzes the precedent step in the pathway and with a DUF35 protein. The acetoacetyl-CoA thiolase/HMG-CoA synthase complex channels the intermediate via a fused CoA-binding site, which allows for efficient coupling of the endergonic thiolase reaction with the exergonic HMGCS reaction.

The enzyme catalyses acetoacetyl-CoA + acetyl-CoA + H2O = (3S)-3-hydroxy-3-methylglutaryl-CoA + CoA + H(+). The protein operates within metabolic intermediate biosynthesis; (R)-mevalonate biosynthesis; (R)-mevalonate from acetyl-CoA: step 2/3. Functionally, catalyzes the condensation of acetyl-CoA with acetoacetyl-CoA to form 3-hydroxy-3-methylglutaryl-CoA (HMG-CoA). Functions in the mevalonate (MVA) pathway leading to isopentenyl diphosphate (IPP), a key precursor for the biosynthesis of isoprenoid compounds that are building blocks of archaeal membrane lipids. This Pyrococcus furiosus (strain ATCC 43587 / DSM 3638 / JCM 8422 / Vc1) protein is Hydroxymethylglutaryl-CoA synthase.